The following is a 260-amino-acid chain: Thiazole synthase (260 aa).

Lysine 96 serves as the catalytic Schiff-base intermediate with DXP. Residues glycine 157, 184–185 (AG), and 206–207 (NT) each bind 1-deoxy-D-xylulose 5-phosphate.

The protein belongs to the ThiG family. Homotetramer. Forms heterodimers with either ThiH or ThiS.

It is found in the cytoplasm. It catalyses the reaction [ThiS sulfur-carrier protein]-C-terminal-Gly-aminoethanethioate + 2-iminoacetate + 1-deoxy-D-xylulose 5-phosphate = [ThiS sulfur-carrier protein]-C-terminal Gly-Gly + 2-[(2R,5Z)-2-carboxy-4-methylthiazol-5(2H)-ylidene]ethyl phosphate + 2 H2O + H(+). It participates in cofactor biosynthesis; thiamine diphosphate biosynthesis. Its function is as follows. Catalyzes the rearrangement of 1-deoxy-D-xylulose 5-phosphate (DXP) to produce the thiazole phosphate moiety of thiamine. Sulfur is provided by the thiocarboxylate moiety of the carrier protein ThiS. In vitro, sulfur can be provided by H(2)S. This is Thiazole synthase from Bradyrhizobium sp. (strain BTAi1 / ATCC BAA-1182).